The following is a 338-amino-acid chain: Taste receptor type 2 member 39 (338 aa).

The Extracellular segment spans residues 1–30 (MLGRCFPPDTKEKQQLRMTKLCDPAESELS). Residues 31-51 (PFLITLILAVLLAEYLIGIIA) traverse the membrane as a helical segment. Topologically, residues 52–74 (NGFIMAIHAAEWVQNKAVSTSGR) are cytoplasmic. The helical transmembrane segment at 75–95 (ILVFLSVSRIALQSLMMLEIT) threads the bilayer. At 96–116 (ISSTSLSFYSEDAVYYAFKIS) the chain is on the extracellular side. A helical membrane pass occupies residues 117–137 (FIFLNFCSLWFAAWLSFFYFV). At 138-156 (KIANFSYPLFLKLRWRITG) the chain is on the cytoplasmic side. Residues 157-177 (LIPWLLWLSVFISFSHSMFCI) form a helical membrane-spanning segment. The Extracellular segment spans residues 178 to 205 (NICTVYCNNSFPIHSSNSTKKTYLSEIN). N-linked (GlcNAc...) asparagine glycosylation is found at N185 and N194. The helical transmembrane segment at 206–226 (VVGLAFFFNLGIVTPLIMFIL) threads the bilayer. At 227 to 262 (TATLLILSLKRHTLHMGSNATGSNDPSMEAHMGAIK) the chain is on the cytoplasmic side. A helical transmembrane segment spans residues 263–283 (AISYFLILYIFNAVALFIYLS). The Extracellular segment spans residues 284–291 (NMFDINSL). Residues 292 to 312 (WNNLCQIIMAAYPAGHSILPI) form a helical membrane-spanning segment. Residues 313–338 (QDNPGLRRAWKRLQLRLHLYPKEWTL) are Cytoplasmic-facing.

The protein belongs to the G-protein coupled receptor T2R family.

The protein localises to the membrane. In terms of biological role, receptor that may play a role in the perception of bitterness and is gustducin-linked. May play a role in sensing the chemical composition of the gastrointestinal content. The activity of this receptor may stimulate alpha gustducin, mediate PLC-beta-2 activation and lead to the gating of TRPM5. The polypeptide is Taste receptor type 2 member 39 (TAS2R39) (Pan paniscus (Pygmy chimpanzee)).